The following is a 508-amino-acid chain: Glycerol kinase (508 aa).

ADP is bound at residue Thr14. ATP contacts are provided by Thr14, Thr15, and Ser16. Thr14 provides a ligand contact to sn-glycerol 3-phosphate. Arg18 provides a ligand contact to ADP. Sn-glycerol 3-phosphate is bound by residues Arg84, Glu85, and Tyr136. Glycerol is bound by residues Arg84, Glu85, and Tyr136. Residue His232 is modified to Phosphohistidine; by HPr. Asp246 contributes to the sn-glycerol 3-phosphate binding site. Glycerol is bound by residues Asp246 and Gln247. 2 residues coordinate ADP: Thr268 and Gly311. Thr268, Gly311, Gln315, and Gly412 together coordinate ATP. Residues Gly412 and Asn416 each contribute to the ADP site.

It belongs to the FGGY kinase family. Homotetramer and homodimer (in equilibrium). Post-translationally, the phosphoenolpyruvate-dependent sugar phosphotransferase system (PTS), including enzyme I, and histidine-containing protein (HPr) are required for the phosphorylation, which leads to the activation of the enzyme.

The enzyme catalyses glycerol + ATP = sn-glycerol 3-phosphate + ADP + H(+). Its pathway is polyol metabolism; glycerol degradation via glycerol kinase pathway; sn-glycerol 3-phosphate from glycerol: step 1/1. Its activity is regulated as follows. Activated by phosphorylation and inhibited by fructose 1,6-bisphosphate (FBP). Key enzyme in the regulation of glycerol uptake and metabolism. Catalyzes the phosphorylation of glycerol to yield sn-glycerol 3-phosphate. In Streptococcus pyogenes serotype M4 (strain MGAS10750), this protein is Glycerol kinase.